Reading from the N-terminus, the 764-residue chain is Plasma membrane fusion protein prm-1 (764 aa).

Residues 1–61 (MVYNEKNGGG…YLGLRARLSQ (61 aa)) are Extracellular-facing. The helical transmembrane segment at 62-82 (LWFNRWTILLILVLIRVIILT) threads the bilayer. Topologically, residues 83–149 (ANLKENLGDA…LKMILTGVQA (67 aa)) are cytoplasmic. The helical transmembrane segment at 150–170 (IIMFVINMYIGTFACLVAAFI) threads the bilayer. The Extracellular portion of the chain corresponds to 171 to 334 (HGGLHVATAV…SLITLVYKAK (164 aa)). Residues Asn-271 and Asn-315 are each glycosylated (N-linked (GlcNAc...) asparagine). A helical membrane pass occupies residues 335–355 (IAFLVVIIILALLAIFVMGYI). The Cytoplasmic segment spans residues 356 to 424 (EYRGFKRERE…AFAYATSLPA (69 aa)). A helical transmembrane segment spans residues 425-445 (LFVLSLAVAGMLSCLFQWVLL). The Extracellular portion of the chain corresponds to 446 to 624 (RQIEKKAPEL…NGVIQEALIT (179 aa)). Asn-479, Asn-508, and Asn-527 each carry an N-linked (GlcNAc...) asparagine glycan. The helical transmembrane segment at 625–645 (LGLFLTYVIVVLIGVMGALIG) threads the bilayer. Topologically, residues 646–764 (WATPGKTRGE…EKVPGYFTPI (119 aa)) are cytoplasmic. 2 disordered regions span residues 653–701 (RGEG…GGGG) and 735–754 (HQRT…PHGD).

It belongs to the PRM1 family.

The protein resides in the cell membrane. Involved in cell fusion during mating by stabilizing the plasma membrane fusion event. The chain is Plasma membrane fusion protein prm-1 (prm-1) from Neurospora crassa (strain ATCC 24698 / 74-OR23-1A / CBS 708.71 / DSM 1257 / FGSC 987).